The sequence spans 289 residues: Iodotyrosine deiodinase 1 (289 aa).

A helical transmembrane segment spans residues 1 to 21 (MYFLTPILVAILCILVVWIFK). A compositionally biased stretch (basic and acidic residues) spans 47-58 (DLKDSSDLHQAE). The segment at 47-69 (DLKDSSDLHQAEEDADEWQESEE) is disordered. Residues 59–69 (EDADEWQESEE) are compositionally biased toward acidic residues. Residues 100-104 (RRSVR), Ser128, and 128-129 (SG) contribute to the FMN site. 3,5-diiodo-L-tyrosine is bound by residues Ala130, Glu157, Tyr161, and Lys182. Positions 130, 157, 161, and 182 each coordinate 3-iodo-L-tyrosine. FMN contacts are provided by residues 237 to 239 (TTT) and Arg279.

The protein belongs to the nitroreductase family. In terms of assembly, homodimer. FMN is required as a cofactor.

It is found in the cell membrane. The protein localises to the cytoplasmic vesicle membrane. It carries out the reaction 2 iodide + L-tyrosine + 2 NADP(+) = 3,5-diiodo-L-tyrosine + 2 NADPH + H(+). The enzyme catalyses iodide + L-tyrosine + NADP(+) = 3-iodo-L-tyrosine + NADPH. It catalyses the reaction 3-iodo-L-tyrosine + iodide + NADP(+) = 3,5-diiodo-L-tyrosine + NADPH + H(+). The catalysed reaction is L-tyrosine + chloride + NADP(+) = 3-chloro-L-tyrosine + NADPH. It carries out the reaction bromide + L-tyrosine + NADP(+) = 3-bromo-L-tyrosine + NADPH. Catalyzes the dehalogenation of halotyrosines such as 3-bromo-L-tyrosine, 3-chloro-L-tyrosine, 3-iodo-L-tyrosine and 3,5-diiodo-L-tyrosine. During thyroid hormone biosynthesis, facilitates iodide salvage by catalysing the oxidative NADPH-dependent deiodination of the halogenated by-products of thyroid hormone production, monoiodotyrosine (L-MIT) and diiodotyrosine (L-DIT). The scavanged iodide can then reenter the hormone-producing pathways. Acts more efficiently on 3-iodo-L-tyrosine than 3,5-diiodo-L-tyrosine. The chain is Iodotyrosine deiodinase 1 (IYD) from Pongo abelii (Sumatran orangutan).